A 181-amino-acid polypeptide reads, in one-letter code: MRITISGPPGSGTTSLARYLAGKHGLDLISAGEVFRQLAKEHGMDLADFGKFAENDPSVDRMIDARQKEIGEAAENIIIEGRLSGRMVGNADLRIWLSASLSCRARRIAGRDGMDEEGARAYTENRQRSEATRYRNYYGIEIDDLSPYDIVLSSETFGVDALGTIVDAAIACLARQQAADL.

ATP is bound at residue 7 to 15 (GPPGSGTTS).

This sequence belongs to the cytidylate kinase family. Type 2 subfamily.

The protein resides in the cytoplasm. The enzyme catalyses CMP + ATP = CDP + ADP. The catalysed reaction is dCMP + ATP = dCDP + ADP. The sequence is that of Cytidylate kinase from Methanoculleus marisnigri (strain ATCC 35101 / DSM 1498 / JR1).